A 518-amino-acid chain; its full sequence is Cytokinin hydroxylase (518 aa).

A helical membrane pass occupies residues 1 to 21 (MLLTILKSLLVIFVTTILRVL). Cys464 is a heme binding site.

Belongs to the cytochrome P450 family. Heme serves as cofactor. As to expression, expressed in roots and flowers.

Its subcellular location is the membrane. It catalyses the reaction N(6)-(dimethylallyl)adenosine 5'-phosphate + NADPH + O2 + H(+) = 9-ribosyl-trans-zeatin 5'-phosphate + NADP(+) + H2O. It carries out the reaction N(6)-(dimethylallyl)adenosine 5'-diphosphate + NADPH + O2 + H(+) = 9-ribosyl-trans-zeatin 5'-diphosphate + NADP(+) + H2O. The catalysed reaction is N(6)-(dimethylallyl)adenosine 5'-triphosphate + NADPH + O2 + H(+) = 9-ribosyl-trans-zeatin 5'-triphosphate + NADP(+) + H2O. Functionally, cytokinin hydroxylase that catalyzes the biosynthesis of trans-zeatin via the isopentenyladenine riboside 5'-monophosphate (iPRMP)-dependent pathway. Can use isopentenyladenosine-5'-monophosphate, isopentenyladenosine-5'-diphosphate and isopentenyladenosine-5'-triphosphate as substrate. This is Cytokinin hydroxylase (CYP735A1) from Arabidopsis thaliana (Mouse-ear cress).